The primary structure comprises 879 residues: Paramyosin, long form (879 aa).

The interval 1–31 (MSSSQAVRSSKYSYRATSTGPGTADVNIEYI) is nonhelical region. Ser-18 bears the Phosphoserine mark. Residues 32–858 (QDLSSLSRLE…IIRAKHRTFV (827 aa)) are a coiled coil. The nonhelical region stretch occupies residues 859 to 879 (TTSTVPGSQVYIQETTRTITE).

Belongs to the paramyosin family. As to quaternary structure, heterodimer of two isoforms. The more-acidic and less-abundant isoform is phosphorylated. In terms of tissue distribution, expressed in all larval and adult muscle tissues. Expression is five times higher in tubular than in fibrillar muscles.

It is found in the cytoplasm. Its subcellular location is the myofibril. Functionally, paramyosin is a major structural component of many thick filaments isolated from invertebrate muscles. The protein is Paramyosin, long form (Prm) of Drosophila melanogaster (Fruit fly).